Reading from the N-terminus, the 1256-residue chain is Topoisomerase 1-associated factor 1 (1256 aa).

Residues 26–38 show a composition bias toward acidic residues; it reads GFIVSDEENDNLE. Disordered regions lie at residues 26–58, 695–725, 1052–1121, and 1176–1256; these read GFIV…VDEY, SKKK…RTHA, SGAE…EAFF, and SDGV…DEDE. Basic and acidic residues predominate over residues 39 to 53; that stretch reads NENRNERDPDSRNQD. The segment covering 1060–1086 has biased composition (basic residues); that stretch reads GKARKRGNKSSSTIKKKSLQSRSRRPP. 2 stretches are compositionally biased toward basic and acidic residues: residues 1097 to 1110 and 1179 to 1190; these read ELRK…FVHD and VDTHSHQDDKSQ. A compositionally biased stretch (acidic residues) spans 1194 to 1204; that stretch reads SENEDSSEEVS. Low complexity predominate over residues 1222 to 1231; it reads DNNVSENYVS.

This sequence belongs to the timeless family. In terms of assembly, component of the fork protection complex (FPC) consisting of TOF1 and CSM3.

The protein localises to the nucleus. Functionally, forms a fork protection complex (FPC) with CSM3 and which is required for chromosome segregation during meiosis and DNA damage repair. FPC coordinates leading and lagging strand synthesis and moves with the replication fork. FPC stabilizes replication forks in a configuration that is recognized by replication checkpoint sensors. The polypeptide is Topoisomerase 1-associated factor 1 (TOF1) (Scheffersomyces stipitis (strain ATCC 58785 / CBS 6054 / NBRC 10063 / NRRL Y-11545) (Yeast)).